The primary structure comprises 424 residues: Enolase (424 aa).

A (2R)-2-phosphoglycerate-binding site is contributed by glutamine 163. Catalysis depends on glutamate 204, which acts as the Proton donor. Mg(2+)-binding residues include aspartate 241, glutamate 284, and aspartate 311. (2R)-2-phosphoglycerate contacts are provided by lysine 336, arginine 365, serine 366, and lysine 387. Residue lysine 336 is the Proton acceptor of the active site.

This sequence belongs to the enolase family. Mg(2+) serves as cofactor.

It localises to the cytoplasm. The protein localises to the secreted. It is found in the cell surface. The enzyme catalyses (2R)-2-phosphoglycerate = phosphoenolpyruvate + H2O. Its pathway is carbohydrate degradation; glycolysis; pyruvate from D-glyceraldehyde 3-phosphate: step 4/5. Functionally, catalyzes the reversible conversion of 2-phosphoglycerate (2-PG) into phosphoenolpyruvate (PEP). It is essential for the degradation of carbohydrates via glycolysis. This Dictyoglomus thermophilum (strain ATCC 35947 / DSM 3960 / H-6-12) protein is Enolase.